A 433-amino-acid polypeptide reads, in one-letter code: Enolase (433 aa).

Glutamine 166 provides a ligand contact to (2R)-2-phosphoglycerate. Glutamate 208 functions as the Proton donor in the catalytic mechanism. Mg(2+) contacts are provided by aspartate 245, glutamate 290, and aspartate 317. The (2R)-2-phosphoglycerate site is built by lysine 342, arginine 371, serine 372, and lysine 393. Lysine 342 acts as the Proton acceptor in catalysis.

Belongs to the enolase family. Mg(2+) serves as cofactor.

The protein localises to the cytoplasm. It localises to the secreted. The protein resides in the cell surface. It catalyses the reaction (2R)-2-phosphoglycerate = phosphoenolpyruvate + H2O. The protein operates within carbohydrate degradation; glycolysis; pyruvate from D-glyceraldehyde 3-phosphate: step 4/5. Catalyzes the reversible conversion of 2-phosphoglycerate (2-PG) into phosphoenolpyruvate (PEP). It is essential for the degradation of carbohydrates via glycolysis. The chain is Enolase from Clostridium novyi (strain NT).